Consider the following 381-residue polypeptide: 4-hydroxy-3-methylbut-2-en-1-yl diphosphate synthase (flavodoxin) (381 aa).

The [4Fe-4S] cluster site is built by cysteine 280, cysteine 283, cysteine 315, and glutamate 322.

It belongs to the IspG family. [4Fe-4S] cluster serves as cofactor.

It catalyses the reaction (2E)-4-hydroxy-3-methylbut-2-enyl diphosphate + oxidized [flavodoxin] + H2O + 2 H(+) = 2-C-methyl-D-erythritol 2,4-cyclic diphosphate + reduced [flavodoxin]. It participates in isoprenoid biosynthesis; isopentenyl diphosphate biosynthesis via DXP pathway; isopentenyl diphosphate from 1-deoxy-D-xylulose 5-phosphate: step 5/6. Converts 2C-methyl-D-erythritol 2,4-cyclodiphosphate (ME-2,4cPP) into 1-hydroxy-2-methyl-2-(E)-butenyl 4-diphosphate. This is 4-hydroxy-3-methylbut-2-en-1-yl diphosphate synthase (flavodoxin) from Clavibacter michiganensis subsp. michiganensis (strain NCPPB 382).